The chain runs to 676 residues: DNA ligase (676 aa).

Residues 42–46 (DDVYD), 91–92 (SL), and E121 contribute to the NAD(+) site. K123 (N6-AMP-lysine intermediate) is an active-site residue. 4 residues coordinate NAD(+): R144, E178, K294, and K318. Zn(2+) contacts are provided by C412, C415, C430, and C435. The BRCT domain occupies 596–676 (NSTSEFTGKR…QLQAAMDETK (81 aa)).

This sequence belongs to the NAD-dependent DNA ligase family. LigA subfamily. The cofactor is Mg(2+). It depends on Mn(2+) as a cofactor.

The catalysed reaction is NAD(+) + (deoxyribonucleotide)n-3'-hydroxyl + 5'-phospho-(deoxyribonucleotide)m = (deoxyribonucleotide)n+m + AMP + beta-nicotinamide D-nucleotide.. Its function is as follows. DNA ligase that catalyzes the formation of phosphodiester linkages between 5'-phosphoryl and 3'-hydroxyl groups in double-stranded DNA using NAD as a coenzyme and as the energy source for the reaction. It is essential for DNA replication and repair of damaged DNA. In Levilactobacillus brevis (strain ATCC 367 / BCRC 12310 / CIP 105137 / JCM 1170 / LMG 11437 / NCIMB 947 / NCTC 947) (Lactobacillus brevis), this protein is DNA ligase.